Here is a 256-residue protein sequence, read N- to C-terminus: MDCNNLLNAARRGEAELLTRLLNEGCSPDVQDDYGRTPLYYAAERGDVGTVDLLIKAGADPNARDREGKTPIIIATQSRKFGVIPLLSASAVGVEEALYTAARNGCHKAVRYMLARGVRPGASHGESLLHLVAGDAGLVKLLLEYGVDPNARDAHGKTPLHMASEHNCAQCVELLLKRGPDVNVKDGAGRTPLHYADDVDCIKLLLRYGADLNAVDNMGRTPLHYAEDGLAAEALLKRGARPVPDKYGELPTIPTC.

8 ANK repeats span residues 1–30 (MDCNNLLNAARRGEAELLTRLLNEGCSPDV), 34–63 (YGRTPLYYAAERGDVGTVDLLIKAGADPNA), 67–92 (EGKTPIIIATQSRKFGVIPLLSASAV), 93–122 (GVEEALYTAARNGCHKAVRYMLARGVRPGA), 124–151 (HGESLLHLVAGDAGLVKLLLEYGVDPNA), 155–184 (HGKTPLHMASEHNCAQCVELLLKRGPDVNV), 188–214 (AGRTPLHYADDVDCIKLLLRYGADLNA), and 218–245 (MGRTPLHYAEDGLAAEALLKRGARPVPD).

The protein is Putative ankyrin repeat protein PAE1861 of Pyrobaculum aerophilum (strain ATCC 51768 / DSM 7523 / JCM 9630 / CIP 104966 / NBRC 100827 / IM2).